Reading from the N-terminus, the 906-residue chain is Translation initiation factor IF-2 (906 aa).

2 disordered regions span residues Arg-134–Val-250 and His-269–Pro-317. Over residues Arg-136–Glu-177 the composition is skewed to basic and acidic residues. Composition is skewed to low complexity over residues Glu-178–Ala-232 and Gly-287–Asn-305. The tr-type G domain maps to Thr-405–Lys-574. Residues Gly-414–Thr-421 form a G1 region. Gly-414–Thr-421 contacts GTP. Residues Gly-439–His-443 form a G2 region. The G3 stretch occupies residues Asp-460–Gly-463. GTP-binding positions include Asp-460–His-464 and Asn-514–Asp-517. Positions Asn-514–Asp-517 are G4. The G5 stretch occupies residues Ser-550–Lys-552.

This sequence belongs to the TRAFAC class translation factor GTPase superfamily. Classic translation factor GTPase family. IF-2 subfamily.

It localises to the cytoplasm. Its function is as follows. One of the essential components for the initiation of protein synthesis. Protects formylmethionyl-tRNA from spontaneous hydrolysis and promotes its binding to the 30S ribosomal subunits. Also involved in the hydrolysis of GTP during the formation of the 70S ribosomal complex. The chain is Translation initiation factor IF-2 from Xanthomonas oryzae pv. oryzae (strain MAFF 311018).